A 252-amino-acid polypeptide reads, in one-letter code: uncharacterized protein (252 aa).

An N-terminal signal peptide occupies residues Met1–Ala22. The N-palmitoyl cysteine moiety is linked to residue Cys23. Cys23 is lipidated: S-diacylglycerol cysteine.

This sequence belongs to the staphylococcal tandem lipoprotein family.

The protein resides in the cell membrane. This is an uncharacterized protein from Staphylococcus aureus (strain MW2).